The sequence spans 935 residues: 2-oxoglutarate dehydrogenase E1 component (935 aa).

The protein belongs to the alpha-ketoglutarate dehydrogenase family. As to quaternary structure, homodimer. Part of the 2-oxoglutarate dehydrogenase (OGDH) complex composed of E1 (2-oxoglutarate dehydrogenase), E2 (dihydrolipoamide succinyltransferase) and E3 (dihydrolipoamide dehydrogenase); the complex contains multiple copies of the three enzymatic components (E1, E2 and E3). It depends on thiamine diphosphate as a cofactor.

It catalyses the reaction N(6)-[(R)-lipoyl]-L-lysyl-[protein] + 2-oxoglutarate + H(+) = N(6)-[(R)-S(8)-succinyldihydrolipoyl]-L-lysyl-[protein] + CO2. Functionally, E1 component of the 2-oxoglutarate dehydrogenase (OGDH) complex which catalyzes the decarboxylation of 2-oxoglutarate, the first step in the conversion of 2-oxoglutarate to succinyl-CoA and CO(2). This is 2-oxoglutarate dehydrogenase E1 component (sucA) from Haemophilus influenzae (strain ATCC 51907 / DSM 11121 / KW20 / Rd).